The chain runs to 138 residues: Low molecular weight protein-tyrosine-phosphatase PtpB (138 aa).

The Nucleophile role is filled by C7. R13 is a catalytic residue. D111 (proton donor) is an active-site residue.

This sequence belongs to the low molecular weight phosphotyrosine protein phosphatase family.

It catalyses the reaction O-phospho-L-tyrosyl-[protein] + H2O = L-tyrosyl-[protein] + phosphate. In terms of biological role, dephosphorylates the phosphotyrosine-containing proteins. The sequence is that of Low molecular weight protein-tyrosine-phosphatase PtpB (ptpB) from Staphylococcus haemolyticus (strain JCSC1435).